The primary structure comprises 223 residues: Probable transaldolase (223 aa).

Lysine 92 functions as the Schiff-base intermediate with substrate in the catalytic mechanism.

Belongs to the transaldolase family. Type 3B subfamily.

It localises to the cytoplasm. It carries out the reaction D-sedoheptulose 7-phosphate + D-glyceraldehyde 3-phosphate = D-erythrose 4-phosphate + beta-D-fructose 6-phosphate. Its pathway is carbohydrate degradation; pentose phosphate pathway; D-glyceraldehyde 3-phosphate and beta-D-fructose 6-phosphate from D-ribose 5-phosphate and D-xylulose 5-phosphate (non-oxidative stage): step 2/3. In terms of biological role, transaldolase is important for the balance of metabolites in the pentose-phosphate pathway. In Thermus thermophilus (strain ATCC BAA-163 / DSM 7039 / HB27), this protein is Probable transaldolase.